A 276-amino-acid polypeptide reads, in one-letter code: F420-dependent methylenetetrahydromethanopterin dehydrogenase (276 aa).

The segment at 253 to 276 is disordered; sequence TVLRTPHGKEGKTLSKKDLLAKPE. Residues 259 to 276 are compositionally biased toward basic and acidic residues; it reads HGKEGKTLSKKDLLAKPE.

Belongs to the MTD family. As to quaternary structure, found to be tightly associated with methyl-coenzyme M methylreductase.

It carries out the reaction 5,10-methylenetetrahydromethanopterin + oxidized coenzyme F420-(gamma-L-Glu)(n) + 2 H(+) = 5,10-methenyl-5,6,7,8-tetrahydromethanopterin + reduced coenzyme F420-(gamma-L-Glu)(n). It functions in the pathway one-carbon metabolism; methanogenesis from CO(2); 5,10-methylene-5,6,7,8-tetrahydromethanopterin from 5,10-methenyl-5,6,7,8-tetrahydromethanopterin (coenzyme F420 route): step 1/1. With respect to regulation, activity requires salt; 100 mM sodium or potassium salts of chloride, phosphate or sulfate are equally effective. Not inactivated by O(2). Inhibited by hydrogen-producing 5,10-methenyltetrahydromethanopterin hydrogenase which has a higher affinity for their shared substrate. Enzyme is O(2)-stable and strictly dependent on coenzyme F420. Its function is as follows. Catalyzes the reversible reduction of methenyl-H(4)MPT(+) to methylene-H(4)MPT. The polypeptide is F420-dependent methylenetetrahydromethanopterin dehydrogenase (Methanothermobacter marburgensis (strain ATCC BAA-927 / DSM 2133 / JCM 14651 / NBRC 100331 / OCM 82 / Marburg) (Methanobacterium thermoautotrophicum)).